We begin with the raw amino-acid sequence, 220 residues long: PKHD-type hydroxylase sync_1544 (220 aa).

The region spanning 79–173 is the Fe2OG dioxygenase domain; the sequence is KLHRFLISKT…RTVCVGWIES (95 aa). Fe cation is bound by residues His-97, Asp-99, and His-154. Arg-164 serves as a coordination point for 2-oxoglutarate.

Fe(2+) is required as a cofactor. Requires L-ascorbate as cofactor.

The protein is PKHD-type hydroxylase sync_1544 of Synechococcus sp. (strain CC9311).